We begin with the raw amino-acid sequence, 110 residues long: Phosphoribosyl-ATP pyrophosphatase (110 aa).

The protein belongs to the PRA-PH family.

Its subcellular location is the cytoplasm. The catalysed reaction is 1-(5-phospho-beta-D-ribosyl)-ATP + H2O = 1-(5-phospho-beta-D-ribosyl)-5'-AMP + diphosphate + H(+). Its pathway is amino-acid biosynthesis; L-histidine biosynthesis; L-histidine from 5-phospho-alpha-D-ribose 1-diphosphate: step 2/9. The sequence is that of Phosphoribosyl-ATP pyrophosphatase from Clostridium novyi (strain NT).